Reading from the N-terminus, the 250-residue chain is Beta-crystallin B1 (250 aa).

Polar residues predominate over residues 1 to 13 (MSQAAKASATTAV). The tract at residues 1–49 (MSQAAKASATTAVNPGPDGKGKGAPSTGPAPAPGPTPVPASVPRPAAKV) is disordered. Ser2 is subject to N-acetylserine. Residues 2 to 56 (SQAAKASATTAVNPGPDGKGKGAPSTGPAPAPGPTPVPASVPRPAAKVGDLPPGS) form an N-terminal arm region. The span at 28-42 (GPAPAPGPTPVPASV) shows a compositional bias: pro residues. Beta/gamma crystallin 'Greek key' domains follow at residues 57-96 (YRLI…IVVS) and 97-141 (GPWV…RPIR). A connecting peptide region spans residues 142–146 (MDSQE). Beta/gamma crystallin 'Greek key' domains lie at 147 to 188 (HKIC…TVSG) and 189 to 231 (GTWV…RRLR). The interval 233–250 (RQWHQEGCFPVLTAEPPK) is C-terminal arm.

Belongs to the beta/gamma-crystallin family. Homo/heterodimer, or complexes of higher-order. The structure of beta-crystallin oligomers seems to be stabilized through interactions between the N-terminal arms. Specific cleavages in the N-terminal arm occur during lens maturation and give rise to truncated forms, leading to impaired oligomerization and protein insolubilization. The protease responsible for this partial degradation could be calpain II.

Its function is as follows. Crystallins are the dominant structural components of the vertebrate eye lens. This chain is Beta-crystallin B1 (Crybb1), found in Mus musculus (Mouse).